We begin with the raw amino-acid sequence, 397 residues long: Tryptophan synthase beta chain (397 aa).

At lysine 91 the chain carries N6-(pyridoxal phosphate)lysine.

The protein belongs to the TrpB family. As to quaternary structure, tetramer of two alpha and two beta chains. Pyridoxal 5'-phosphate is required as a cofactor.

It carries out the reaction (1S,2R)-1-C-(indol-3-yl)glycerol 3-phosphate + L-serine = D-glyceraldehyde 3-phosphate + L-tryptophan + H2O. The protein operates within amino-acid biosynthesis; L-tryptophan biosynthesis; L-tryptophan from chorismate: step 5/5. Its function is as follows. The beta subunit is responsible for the synthesis of L-tryptophan from indole and L-serine. The chain is Tryptophan synthase beta chain from Bacillus cereus (strain ATCC 14579 / DSM 31 / CCUG 7414 / JCM 2152 / NBRC 15305 / NCIMB 9373 / NCTC 2599 / NRRL B-3711).